The chain runs to 165 residues: NADPH-dependent 7-cyano-7-deazaguanine reductase (165 aa).

Cysteine 56 acts as the Thioimide intermediate in catalysis. The active-site Proton donor is the aspartate 63. Residues 78–80 and 97–98 each bind substrate; these read VES and HE.

Belongs to the GTP cyclohydrolase I family. QueF type 1 subfamily.

The protein resides in the cytoplasm. The catalysed reaction is 7-aminomethyl-7-carbaguanine + 2 NADP(+) = 7-cyano-7-deazaguanine + 2 NADPH + 3 H(+). The protein operates within tRNA modification; tRNA-queuosine biosynthesis. Functionally, catalyzes the NADPH-dependent reduction of 7-cyano-7-deazaguanine (preQ0) to 7-aminomethyl-7-deazaguanine (preQ1). In Bacillus anthracis (strain A0248), this protein is NADPH-dependent 7-cyano-7-deazaguanine reductase.